A 292-amino-acid polypeptide reads, in one-letter code: Elongation factor Ts (292 aa).

Residues 80 to 83 are involved in Mg(2+) ion dislocation from EF-Tu; it reads TDFV.

It belongs to the EF-Ts family.

It is found in the cytoplasm. In terms of biological role, associates with the EF-Tu.GDP complex and induces the exchange of GDP to GTP. It remains bound to the aminoacyl-tRNA.EF-Tu.GTP complex up to the GTP hydrolysis stage on the ribosome. The polypeptide is Elongation factor Ts (Oenococcus oeni (strain ATCC BAA-331 / PSU-1)).